Consider the following 260-residue polypeptide: GDNF family receptor alpha-4 (260 aa).

The signal sequence occupies residues 1–23 (MAHCMESALLLLLLLGSASFTDG). The N-linked (GlcNAc...) asparagine glycan is linked to Asn184. Thr237 carries the GPI-anchor amidated threonine lipid modification. Residues 238–260 (AGCCFPRVSWLYALTALALQALL) constitute a propeptide, removed in mature form.

This sequence belongs to the GDNFR family. As to quaternary structure, interacts with ARTN ligand and RET: forms a 2:2:2 ternary complex composed of ARTN ligand, GFRA3 and RET receptor. Interacts with SORL1. In terms of tissue distribution, expressed in many tissues including adrenal medulla, brain neurons, with highest levels in the cerebral cortex and hippocampus. Moderate levels found in the gut circular muscle and myenteric ganglia as well as in other peripheral ganglia, including the sensory dorsal root and trigeminal as well as superior cervical and sympathetic chain ganglia. Isoform a1, isoform a2, isoform b1 and isoform b2 are exclusively found in the thyroid, parthyroid and pituitary glands.

The protein resides in the cell membrane. The protein localises to the secreted. Its function is as follows. Receptor for persephin (PSPN), a growth factor that exhibits neurotrophic activity on mesencephalic dopaminergic and motor neurons. Acts by binding to its coreceptor, GFRA4, leading to autophosphorylation and activation of the RET receptor. May be important in C-cell development and, in the postnatal development of the adrenal medulla. The chain is GDNF family receptor alpha-4 (Gfra4) from Mus musculus (Mouse).